The sequence spans 103 residues: Histone H4 (103 aa).

The span at 1–14 (MSGRGKGGKGLGKG) shows a compositional bias: gly residues. The tract at residues 1–20 (MSGRGKGGKGLGKGGAKRHR) is disordered. Residue lysine 6 is modified to N6-acetyl-N6-methyllysine; alternate. Lysine 6, lysine 9, and lysine 13 each carry N6-methyllysine; alternate. Lysine 13 carries the N6-acetyl-N6-methyllysine; alternate modification. A DNA-binding region spans residues 17-21 (KRHRK). Lysine 92 bears the N6-glutaryllysine mark.

Belongs to the histone H4 family. The nucleosome is a histone octamer containing two molecules each of H2A, H2B, H3 and H4 assembled in one H3-H4 heterotetramer and two H2A-H2B heterodimers. The octamer wraps approximately 147 bp of DNA. Post-translationally, glutarylation at Lys-92 (H4K91glu) destabilizes nucleosomes by promoting dissociation of the H2A-H2B dimers from nucleosomes.

It is found in the nucleus. It localises to the chromosome. Its function is as follows. Core component of nucleosome. Nucleosomes wrap and compact DNA into chromatin, limiting DNA accessibility to the cellular machineries which require DNA as a template. Histones thereby play a central role in transcription regulation, DNA repair, DNA replication and chromosomal stability. DNA accessibility is regulated via a complex set of post-translational modifications of histones, also called histone code, and nucleosome remodeling. The chain is Histone H4 (H4.1) from Phanerodontia chrysosporium (White-rot fungus).